A 361-amino-acid chain; its full sequence is Chorismate synthase (361 aa).

Positions 48 and 54 each coordinate NADP(+). FMN is bound by residues 125–127 (RSS), 238–239 (NA), glycine 278, 293–297 (KPTSS), and arginine 319.

Belongs to the chorismate synthase family. In terms of assembly, homotetramer. It depends on FMNH2 as a cofactor.

It carries out the reaction 5-O-(1-carboxyvinyl)-3-phosphoshikimate = chorismate + phosphate. Its pathway is metabolic intermediate biosynthesis; chorismate biosynthesis; chorismate from D-erythrose 4-phosphate and phosphoenolpyruvate: step 7/7. Its function is as follows. Catalyzes the anti-1,4-elimination of the C-3 phosphate and the C-6 proR hydrogen from 5-enolpyruvylshikimate-3-phosphate (EPSP) to yield chorismate, which is the branch point compound that serves as the starting substrate for the three terminal pathways of aromatic amino acid biosynthesis. This reaction introduces a second double bond into the aromatic ring system. The protein is Chorismate synthase of Salmonella paratyphi A (strain ATCC 9150 / SARB42).